We begin with the raw amino-acid sequence, 447 residues long: Exodeoxyribonuclease 7 large subunit (447 aa).

Belongs to the XseA family. Heterooligomer composed of large and small subunits.

It localises to the cytoplasm. It carries out the reaction Exonucleolytic cleavage in either 5'- to 3'- or 3'- to 5'-direction to yield nucleoside 5'-phosphates.. Functionally, bidirectionally degrades single-stranded DNA into large acid-insoluble oligonucleotides, which are then degraded further into small acid-soluble oligonucleotides. This is Exodeoxyribonuclease 7 large subunit from Geobacter sulfurreducens (strain ATCC 51573 / DSM 12127 / PCA).